The primary structure comprises 328 residues: PhoH-like protein (328 aa).

135–142 serves as a coordination point for ATP; that stretch reads GPAGTGKT.

The protein belongs to the PhoH family.

Its subcellular location is the cytoplasm. This Synechocystis sp. (strain ATCC 27184 / PCC 6803 / Kazusa) protein is PhoH-like protein.